Here is a 1918-residue protein sequence, read N- to C-terminus: Diacylglycerol kinase eta (1918 aa).

Basic and acidic residues predominate over residues 1-10 (MAHLKLDTLH). The tract at residues 1 to 37 (MAHLKLDTLHVQRSPRGSRRSSPSSGRSSACSSGSIS) is disordered. A compositionally biased stretch (low complexity) spans 20 to 37 (RSSPSSGRSSACSSGSIS). The PH domain maps to 82–175 (AIIKEGFLLK…WLGGLKTATA (94 aa)). 2 consecutive Phorbol-ester/DAG-type zinc fingers follow at residues 195-245 (HHHW…IANC) and 268-319 (PHQW…AVAC). Residues 350–486 (GNFSPLLVFV…DRWSIMVFEK (137 aa)) form the DAGKc domain. Disordered regions lie at residues 783–805 (GANI…NTPT), 1017–1067 (TTLC…DDNP), 1177–1212 (PNTI…GDSI), and 1380–1399 (ERDK…TEEA). Positions 1177-1189 (PNTILTTSTSPTK) are enriched in polar residues. The region spanning 1855–1918 (WSVNEVVTWL…LQAIKDLSEN (64 aa)) is the SAM domain.

Belongs to the eukaryotic diacylglycerol kinase family.

Its subcellular location is the cytoplasm. The enzyme catalyses a 1,2-diacyl-sn-glycerol + ATP = a 1,2-diacyl-sn-glycero-3-phosphate + ADP + H(+). Phosphorylates diacylglycerol (DAG) to generate phosphatidic acid (PA). In Drosophila erecta (Fruit fly), this protein is Diacylglycerol kinase eta.